We begin with the raw amino-acid sequence, 422 residues long: Protein MANNAN SYNTHESIS-RELATED 1 (422 aa).

The Cytoplasmic portion of the chain corresponds to 1–6; sequence MGVDLR. Residues 7 to 26 form a helical; Signal-anchor for type II membrane protein membrane-spanning segment; the sequence is QVVAGILTITMFVMLGQMLH. Topologically, residues 27 to 422 are lumenal; sequence RDYFDSLQEK…KNHLAYSCFC (396 aa). 263 to 265 provides a ligand contact to substrate; the sequence is DLR.

This sequence belongs to the glycosyltransferase GT106 family. Widely expressed.

It localises to the golgi apparatus membrane. The protein operates within glycan biosynthesis. Glycosyltransferase involved in mannan biosynthesis. This is Protein MANNAN SYNTHESIS-RELATED 1 from Arabidopsis thaliana (Mouse-ear cress).